Reading from the N-terminus, the 188-residue chain is Dual specificity protein phosphatase 18 (188 aa).

The 142-residue stretch at 19–160 folds into the Tyrosine-protein phosphatase domain; that stretch reads GLSQITKSLF…LIHYELQLFG (142 aa). A sufficient for mitochondrial localization region spans residues 95-141; it reads MQKGRTLLHCAAGVSRSAALCLAYLMKYHAMSLVDAHTWTKSCRPII. Cysteine 104 (phosphocysteine intermediate) is an active-site residue.

This sequence belongs to the protein-tyrosine phosphatase family. Non-receptor class dual specificity subfamily.

The protein localises to the cytoplasm. Its subcellular location is the nucleus. It is found in the mitochondrion inner membrane. It catalyses the reaction O-phospho-L-tyrosyl-[protein] + H2O = L-tyrosyl-[protein] + phosphate. The enzyme catalyses O-phospho-L-seryl-[protein] + H2O = L-seryl-[protein] + phosphate. It carries out the reaction O-phospho-L-threonyl-[protein] + H2O = L-threonyl-[protein] + phosphate. Functionally, can dephosphorylate single and diphosphorylated synthetic MAPK peptides, with preference for the phosphotyrosine and diphosphorylated forms over phosphothreonine. In vitro, dephosphorylates p-nitrophenyl phosphate (pNPP). The protein is Dual specificity protein phosphatase 18 (Dusp18) of Mus musculus (Mouse).